The chain runs to 193 residues: Probable GTP-binding protein EngB (193 aa).

One can recognise an EngB-type G domain in the interval 22–193; the sequence is ALPEFALAGR…EAWAALERFL (172 aa). Residues 30 to 37, 57 to 61, 75 to 78, 142 to 145, and 174 to 176 contribute to the GTP site; these read GRSNVGKS, GKTQT, DVPG, TKAD, and FSA. The Mg(2+) site is built by S37 and T59.

Belongs to the TRAFAC class TrmE-Era-EngA-EngB-Septin-like GTPase superfamily. EngB GTPase family. Mg(2+) serves as cofactor.

Its function is as follows. Necessary for normal cell division and for the maintenance of normal septation. This is Probable GTP-binding protein EngB from Geobacillus sp. (strain WCH70).